The primary structure comprises 297 residues: UDP-N-acetylenolpyruvoylglucosamine reductase (297 aa).

In terms of domain architecture, FAD-binding PCMH-type spans 27-191 (TGGNADIFVM…LDATFSLELE (165 aa)). R170 is a catalytic residue. The active-site Proton donor is the S220. Residue E290 is part of the active site.

Belongs to the MurB family. FAD is required as a cofactor.

It is found in the cytoplasm. The enzyme catalyses UDP-N-acetyl-alpha-D-muramate + NADP(+) = UDP-N-acetyl-3-O-(1-carboxyvinyl)-alpha-D-glucosamine + NADPH + H(+). The protein operates within cell wall biogenesis; peptidoglycan biosynthesis. In terms of biological role, cell wall formation. The protein is UDP-N-acetylenolpyruvoylglucosamine reductase of Listeria welshimeri serovar 6b (strain ATCC 35897 / DSM 20650 / CCUG 15529 / CIP 8149 / NCTC 11857 / SLCC 5334 / V8).